A 233-amino-acid chain; its full sequence is 2-C-methyl-D-erythritol 4-phosphate cytidylyltransferase (233 aa).

This sequence belongs to the IspD/TarI cytidylyltransferase family. IspD subfamily.

It carries out the reaction 2-C-methyl-D-erythritol 4-phosphate + CTP + H(+) = 4-CDP-2-C-methyl-D-erythritol + diphosphate. It participates in isoprenoid biosynthesis; isopentenyl diphosphate biosynthesis via DXP pathway; isopentenyl diphosphate from 1-deoxy-D-xylulose 5-phosphate: step 2/6. Its function is as follows. Catalyzes the formation of 4-diphosphocytidyl-2-C-methyl-D-erythritol from CTP and 2-C-methyl-D-erythritol 4-phosphate (MEP). This is 2-C-methyl-D-erythritol 4-phosphate cytidylyltransferase from Geotalea uraniireducens (strain Rf4) (Geobacter uraniireducens).